The sequence spans 199 residues: MAFTQPPLPFPKDALEPYGMKAETFDYHYGKHHAAYVTNLNKLVEGTPMESLSLEDVIKQSFGDSSKVGVFNNAAQVWNHTFFWNCLKAGGGGAPTGELAAKIDAAFGSLDKFKEEFSNAAATQFGSGWAWLVDDGGTLKVTKTPNAENPLVHGQKPLLTLDVWEHAYYLDFQNARPAFIKNFLDNLVNWDFVAQNLAA.

Fe cation-binding residues include H28, H80, D162, and H166.

This sequence belongs to the iron/manganese superoxide dismutase family. As to quaternary structure, homodimer. Requires Fe cation as cofactor.

Its subcellular location is the cytoplasm. The catalysed reaction is 2 superoxide + 2 H(+) = H2O2 + O2. Its function is as follows. Destroys superoxide anion radicals which are normally produced within the cells and which are toxic to biological systems. This Leptolyngbya boryana (Plectonema boryanum) protein is Superoxide dismutase [Fe] (sodB).